A 278-amino-acid polypeptide reads, in one-letter code: Bifunctional protein FolD (278 aa).

NADP(+)-binding positions include 165 to 167, Ser-190, and Thr-231; that span reads GRS.

It belongs to the tetrahydrofolate dehydrogenase/cyclohydrolase family. As to quaternary structure, homodimer.

It catalyses the reaction (6R)-5,10-methylene-5,6,7,8-tetrahydrofolate + NADP(+) = (6R)-5,10-methenyltetrahydrofolate + NADPH. The enzyme catalyses (6R)-5,10-methenyltetrahydrofolate + H2O = (6R)-10-formyltetrahydrofolate + H(+). It participates in one-carbon metabolism; tetrahydrofolate interconversion. Its function is as follows. Catalyzes the oxidation of 5,10-methylenetetrahydrofolate to 5,10-methenyltetrahydrofolate and then the hydrolysis of 5,10-methenyltetrahydrofolate to 10-formyltetrahydrofolate. The polypeptide is Bifunctional protein FolD (Clostridium novyi (strain NT)).